The following is a 316-amino-acid chain: F-box protein At4g09920 (316 aa).

The region spanning 1–47 (MDRIIGLPDEVLVKILSFVPTKVAVSTSILSKRWEFLWMWLTKLKFG) is the F-box domain.

The sequence is that of F-box protein At4g09920 from Arabidopsis thaliana (Mouse-ear cress).